Here is a 225-residue protein sequence, read N- to C-terminus: LexA repressor (225 aa).

The H-T-H motif DNA-binding region spans tyrosine 26–serine 46. Catalysis depends on for autocatalytic cleavage activity residues serine 146 and lysine 184.

Belongs to the peptidase S24 family. As to quaternary structure, homodimer.

It carries out the reaction Hydrolysis of Ala-|-Gly bond in repressor LexA.. Functionally, represses a number of genes involved in the response to DNA damage (SOS response), including recA and lexA. In the presence of single-stranded DNA, RecA interacts with LexA causing an autocatalytic cleavage which disrupts the DNA-binding part of LexA, leading to derepression of the SOS regulon and eventually DNA repair. In Pelagibacter ubique (strain HTCC1062), this protein is LexA repressor.